The following is a 612-amino-acid chain: Threonine--tRNA ligase (612 aa).

Residues 218 to 509 (DHRKLGVELG…LSEHFGGNFP (292 aa)) form a catalytic region. Zn(2+) contacts are provided by C310, H361, and H486.

Belongs to the class-II aminoacyl-tRNA synthetase family. As to quaternary structure, homodimer. The cofactor is Zn(2+).

It is found in the cytoplasm. It carries out the reaction tRNA(Thr) + L-threonine + ATP = L-threonyl-tRNA(Thr) + AMP + diphosphate + H(+). Catalyzes the attachment of threonine to tRNA(Thr) in a two-step reaction: L-threonine is first activated by ATP to form Thr-AMP and then transferred to the acceptor end of tRNA(Thr). Also edits incorrectly charged L-seryl-tRNA(Thr). In Helicobacter pylori (strain HPAG1), this protein is Threonine--tRNA ligase.